We begin with the raw amino-acid sequence, 273 residues long: MAIVKCKPTSAGRRHVVKIVNPELHKGKPYAPLLDTKSKTGGRNNLGRITTRHIGGGHKQHYRLVDFKRNKLDIPAVVERLEYDPNRSANIALVLYKDGERRYILAPKGLSVGDEIQAGVNAPIKVGNSLPMRNIPVGSTVHNVELKPGKGGQIARSAGAYVQIIAREGNYVTLRLRSGEMRKVLAECVATIGEVGNSEHMLRVLGKAGANRWRGIRPTVRGTAMNPVDHPHGGGEGRNFGKHPVTPWGVQTKGKKTRHNKRTDKYIVRRRGK.

A disordered region spans residues 221-263 (RGTAMNPVDHPHGGGEGRNFGKHPVTPWGVQTKGKKTRHNKRT). The segment covering 253–263 (KGKKTRHNKRT) has biased composition (basic residues).

It belongs to the universal ribosomal protein uL2 family. Part of the 50S ribosomal subunit. Forms a bridge to the 30S subunit in the 70S ribosome.

Functionally, one of the primary rRNA binding proteins. Required for association of the 30S and 50S subunits to form the 70S ribosome, for tRNA binding and peptide bond formation. It has been suggested to have peptidyltransferase activity; this is somewhat controversial. Makes several contacts with the 16S rRNA in the 70S ribosome. In Actinobacillus succinogenes (strain ATCC 55618 / DSM 22257 / CCUG 43843 / 130Z), this protein is Large ribosomal subunit protein uL2.